We begin with the raw amino-acid sequence, 733 residues long: Ferric aerobactin receptor (733 aa).

Residues 1–25 (MMISKKYTLWALNPLLLTMMAPAVA) form the signal peptide. The TonB box signature appears at 31 to 38 (ETFVVSAN). The TBDR plug domain maps to 43–153 (TVAEMAQTTW…TGGLINIVTK (111 aa)). The TBDR beta-barrel domain occupies 158–733 (ETIMEFEAGT…TFGLNYSVLF (576 aa)). A TonB C-terminal box motif is present at residues 716–733 (YDYKGRGRTFGLNYSVLF).

Belongs to the TonB-dependent receptor family.

It is found in the cell outer membrane. Functionally, receptor for aerobactin. This chain is Ferric aerobactin receptor (iutA), found in Klebsiella pneumoniae.